A 189-amino-acid chain; its full sequence is Elongation factor P (189 aa).

It belongs to the elongation factor P family.

It is found in the cytoplasm. The protein operates within protein biosynthesis; polypeptide chain elongation. Involved in peptide bond synthesis. Stimulates efficient translation and peptide-bond synthesis on native or reconstituted 70S ribosomes in vitro. Probably functions indirectly by altering the affinity of the ribosome for aminoacyl-tRNA, thus increasing their reactivity as acceptors for peptidyl transferase. The polypeptide is Elongation factor P (Pseudomonas fluorescens (strain Pf0-1)).